A 470-amino-acid polypeptide reads, in one-letter code: Auxin transporter-like protein 3 (470 aa).

At 1–57 (MAAEKIETVVAGNYLEMEREEENISGNKKSSTKTKLSNFFWHGGSVYDAWFSCASNQ) the chain is on the cytoplasmic side. Residues 58–75 (VAQVLLTLPYSFSQLGMM) form a helical membrane-spanning segment. The Extracellular segment spans residues 76 to 77 (SG). A helical transmembrane segment spans residues 78–98 (ILFQLFYGLMGSWTAYLISVL). The Cytoplasmic portion of the chain corresponds to 99-134 (YVEYRTRKEREKFDFRNHVIQWFEVLDGLLGKHWRN). Residues 135 to 155 (LGLIFNCTFLLFGSVIQLIAC) traverse the membrane as a helical segment. Over 156 to 170 (ASNIYYINDKLDKRT) the chain is Extracellular. Residues 171–191 (WTYIFGACCATTVFIPSFHNY) form a helical membrane-spanning segment. A topological domain (cytoplasmic) is located at residue Arg192. A helical transmembrane segment spans residues 193–213 (IWSFLGLAMTTYTSWYLTIAS). Over 214 to 230 (LLHGQAEDVKHSGPTTM) the chain is Extracellular. A helical transmembrane segment spans residues 231–251 (VLYFTGATNILYTFGGHAVTV). Topologically, residues 252–264 (EIMHAMWKPQKFK) are cytoplasmic. Residues 265–285 (AIYLLATIYVLTLTLPSASAV) traverse the membrane as a helical segment. At 286-312 (YWAFGDKLLTHSNALSLLPKTGFRDTA) the chain is on the extracellular side. The helical transmembrane segment at 313–333 (VILMLIHQFITFGFASTPLYF) threads the bilayer. Residues 334–354 (VWEKLIGVHETKSMFKRAMAR) are Cytoplasmic-facing. A helical transmembrane segment spans residues 355–375 (LPVVVPIWFLAIIFPFFGPIN). Residue Ser376 is a topological domain, extracellular. A helical transmembrane segment spans residues 377–397 (AVGSLLVSFTVYIIPALAHML). The Cytoplasmic segment spans residues 398–426 (TFAPAPSRENAVERPPRVVGGWMGTYCIN). The chain crosses the membrane as a helical span at residues 427-447 (IFVVVWVFVVGFGFGGWASMV). Topologically, residues 448 to 470 (NFVRQIDTFGLFTKCYQCPPHKP) are extracellular.

Belongs to the amino acid/polyamine transporter 2 family. Amino acid/auxin permease (AAAP) (TC 2.A.18.1) subfamily.

It is found in the cell membrane. In terms of biological role, carrier protein involved in proton-driven auxin influx. Mediates the formation of auxin gradient from developing leaves (site of auxin biosynthesis) to tips by contributing to the loading of auxin in vascular tissues and facilitating acropetal (base to tip) auxin transport within inner tissues of the root apex, and basipetal (tip to base) auxin transport within outer tissues of the root apex. In Arabidopsis thaliana (Mouse-ear cress), this protein is Auxin transporter-like protein 3 (LAX3).